The chain runs to 338 residues: Ketol-acid reductoisomerase (NADP(+)) (338 aa).

In terms of domain architecture, KARI N-terminal Rossmann spans 1-181; the sequence is MKVFYDNDAD…GGTRAGVIET (181 aa). NADP(+)-binding positions include 24-27, R47, S50, S52, and 82-85; these read YGSQ and DEGQ. H107 is an active-site residue. G133 contributes to the NADP(+) binding site. Positions 182–327 constitute a KARI C-terminal knotted domain; that stretch reads SFREETETDL…SKLRSMMTWI (146 aa). 4 residues coordinate Mg(2+): D190, E194, E226, and E230. S251 lines the substrate pocket.

It belongs to the ketol-acid reductoisomerase family. The cofactor is Mg(2+).

The enzyme catalyses (2R)-2,3-dihydroxy-3-methylbutanoate + NADP(+) = (2S)-2-acetolactate + NADPH + H(+). The catalysed reaction is (2R,3R)-2,3-dihydroxy-3-methylpentanoate + NADP(+) = (S)-2-ethyl-2-hydroxy-3-oxobutanoate + NADPH + H(+). It participates in amino-acid biosynthesis; L-isoleucine biosynthesis; L-isoleucine from 2-oxobutanoate: step 2/4. It functions in the pathway amino-acid biosynthesis; L-valine biosynthesis; L-valine from pyruvate: step 2/4. In terms of biological role, involved in the biosynthesis of branched-chain amino acids (BCAA). Catalyzes an alkyl-migration followed by a ketol-acid reduction of (S)-2-acetolactate (S2AL) to yield (R)-2,3-dihydroxy-isovalerate. In the isomerase reaction, S2AL is rearranged via a Mg-dependent methyl migration to produce 3-hydroxy-3-methyl-2-ketobutyrate (HMKB). In the reductase reaction, this 2-ketoacid undergoes a metal-dependent reduction by NADPH to yield (R)-2,3-dihydroxy-isovalerate. The sequence is that of Ketol-acid reductoisomerase (NADP(+)) from Acidithiobacillus ferrooxidans (strain ATCC 23270 / DSM 14882 / CIP 104768 / NCIMB 8455) (Ferrobacillus ferrooxidans (strain ATCC 23270)).